Reading from the N-terminus, the 497-residue chain is Subtilisin-like protease CPC735_031240 (497 aa).

An N-terminal signal peptide occupies residues 1 to 16 (MKGVLSLSLLPLLAAP). The propeptide occupies 17–136 (SPILVDTIHR…IEKDSEVHAW (120 aa)). Residues 43 to 134 (SYIVVFKKNV…QYIEKDSEVH (92 aa)) enclose the Inhibitor I9 domain. The Peptidase S8 domain maps to 146–452 (PWGLARVSHR…GGSSNYTAII (307 aa)). Active-site charge relay system residues include aspartate 182 and histidine 214. Asparagine 244 and asparagine 284 each carry an N-linked (GlcNAc...) asparagine glycan. The Charge relay system role is filled by serine 380. N-linked (GlcNAc...) asparagine glycosylation occurs at asparagine 447.

The protein belongs to the peptidase S8 family.

The protein resides in the secreted. Secreted subtilisin-like serine protease with keratinolytic activity that contributes to pathogenicity. This chain is Subtilisin-like protease CPC735_031240, found in Coccidioides posadasii (strain C735) (Valley fever fungus).